We begin with the raw amino-acid sequence, 286 residues long: Release factor glutamine methyltransferase (286 aa).

S-adenosyl-L-methionine-binding residues include aspartate 148 and asparagine 194. 194–197 serves as a coordination point for substrate; that stretch reads NPPY.

The protein belongs to the protein N5-glutamine methyltransferase family. PrmC subfamily.

The catalysed reaction is L-glutaminyl-[peptide chain release factor] + S-adenosyl-L-methionine = N(5)-methyl-L-glutaminyl-[peptide chain release factor] + S-adenosyl-L-homocysteine + H(+). In terms of biological role, methylates the class 1 translation termination release factors RF1/PrfA and RF2/PrfB on the glutamine residue of the universally conserved GGQ motif. The chain is Release factor glutamine methyltransferase from Leptospira interrogans serogroup Icterohaemorrhagiae serovar Lai (strain 56601).